A 900-amino-acid polypeptide reads, in one-letter code: 3'-5' exonuclease DinG (900 aa).

In terms of domain architecture, Exonuclease spans 8-161 (VVDLETTGNQ…DEDAATTAQL (154 aa)). A Helicase ATP-binding domain is found at 241–496 (TLVTKELGLT…KSIDLLEQQR (256 aa)). Residue 276–283 (APLGSGKS) participates in ATP binding. Positions 448 to 451 (DEAH) match the DEAH box motif. Residues 714 to 883 (YVIEYVSVVE…RYRQKKGDIK (170 aa)) enclose the Helicase C-terminal domain.

The protein belongs to the helicase family. DinG subfamily. Type 2 sub-subfamily.

In terms of biological role, 3'-5' exonuclease. This chain is 3'-5' exonuclease DinG, found in Staphylococcus saprophyticus subsp. saprophyticus (strain ATCC 15305 / DSM 20229 / NCIMB 8711 / NCTC 7292 / S-41).